A 677-amino-acid chain; its full sequence is UPF0652 protein (677 aa).

The segment at 38–84 adopts a B box-type; atypical zinc-finger fold; the sequence is ETPGMCCECTDQPAEVVCLQCQDELCTVCSTSLHRRGSRRSHIFKNK. C43, C46, C66, and H71 together coordinate Zn(2+). Over residues 91 to 111 the composition is skewed to basic and acidic residues; sequence YDELNKRDRQPPLHGKEDEKV. Disordered regions lie at residues 91-142 and 156-192; these read YDEL…NNNI and LNPL…IDED. The segment covering 113 to 126 has biased composition (low complexity); the sequence is NNNNNNNNTNNTNN. The span at 163-178 shows a compositional bias: polar residues; the sequence is HTNQQRNGGGSNNHQI.

The protein belongs to the UPF0652 family.

This Dictyostelium discoideum (Social amoeba) protein is UPF0652 protein.